Consider the following 389-residue polypeptide: Choline/ethanolaminephosphotransferase 1 (389 aa).

Residues 40 to 60 (VFPLWMPPNMITLMGFMFLVT) form a helical membrane-spanning segment. Asn-48 serves as a coordination point for CDP-choline. The Mg(2+) site is built by Asp-95 and Asp-98. CDP-choline is bound at residue Arg-103. Asp-116 contributes to the Mg(2+) binding site. His-117 acts as the Proton acceptor in catalysis. Asp-120 contacts Mg(2+). The next 7 helical transmembrane spans lie at 141–161 (TFWF…EHYF), 176–196 (GLAL…EWWA), 221–241 (VLYM…VTNV), 252–272 (MVLA…VLIW), 280–300 (LIAT…GFLV), 322–344 (SLLY…GVPL), and 350–370 (VLLG…TSVI).

It belongs to the CDP-alcohol phosphatidyltransferase class-I family. Mg(2+) is required as a cofactor. Mn(2+) serves as cofactor.

Its subcellular location is the membrane. The enzyme catalyses CDP-ethanolamine + a 1,2-diacyl-sn-glycerol = a 1,2-diacyl-sn-glycero-3-phosphoethanolamine + CMP + H(+). It carries out the reaction CDP-choline + a 1,2-diacyl-sn-glycerol = a 1,2-diacyl-sn-glycero-3-phosphocholine + CMP + H(+). Its pathway is phospholipid metabolism; phosphatidylethanolamine biosynthesis; phosphatidylethanolamine from ethanolamine: step 3/3. It participates in phospholipid metabolism; phosphatidylcholine biosynthesis; phosphatidylcholine from phosphocholine: step 2/2. Functionally, catalyzes both phosphatidylcholine and phosphatidylethanolamine biosynthesis from CDP-choline and CDP-ethanolamine, respectively. Has a higher cholinephosphotransferase activity than ethanolaminephosphotransferase activity. The chain is Choline/ethanolaminephosphotransferase 1 (AAPT1) from Arabidopsis thaliana (Mouse-ear cress).